The primary structure comprises 63 residues: Small ribosomal subunit protein eS31 (63 aa).

4 residues coordinate Zn(2+): cysteine 31, cysteine 34, cysteine 50, and cysteine 53.

Belongs to the eukaryotic ribosomal protein eS31 family. In terms of assembly, part of the 30S ribosomal subunit. Zn(2+) serves as cofactor.

The chain is Small ribosomal subunit protein eS31 (rps27ae) from Aeropyrum pernix (strain ATCC 700893 / DSM 11879 / JCM 9820 / NBRC 100138 / K1).